Reading from the N-terminus, the 507-residue chain is MEEIQRYLQLKRSQQHDFLYPLIFQEYIYAFAHDRDFGRSILSENLGSKSKSSLLVVKRLISRMYQQNRFILSLNDSNQNPFWTCNNNFDSQIISEGFALIGEIPFSLRFKSCLEEKNKVNSQSLRSIHSIFPFLEDNFSHLNYILDILITHPVHVEILVQNLRYWLKDASSLHLLRFLLNDYWNSLITPKKASSSFSKKNQRLFLFLYNSHVCEYEYFFVFIRKQSSHLLSTSYGVFLERIYCYEKVERLXNVFIKVKDLQANLWLVKEPCMHYVRYQRKFILASKGTSVLMNKWKCYLVTFWQWHFSLWFHPRRIYINQLSNHSLEFLGYLSSVRMNPSVVRSQILENSFLINNGIKKLETLVPIFLLITSLAKAKFCNVLGHPISKPVWADLSDSNIIDRFGRISRNLSHYYSGSSKKKSLYRVKYILRLSCARTLARKHKSTVRAFLKRLGSELLEEFLMSEEDILSLTFPKPSSTLRGVYRSRIWYLDIIWINDLANYKSKI.

This sequence belongs to the intron maturase 2 family. MatK subfamily.

It is found in the plastid. The protein localises to the chloroplast. Functionally, usually encoded in the trnK tRNA gene intron. Probably assists in splicing its own and other chloroplast group II introns. The polypeptide is Maturase K (Craterostigma plantagineum (Blue gem)).